The primary structure comprises 365 residues: 2'-hydroxybiphenyl-2-sulfinate desulfinase (365 aa).

The active site involves C27. Residues C27, H60, and R70 each coordinate 2'-hydroxybiphenyl-2-sulfinate. R70 is a catalytic residue.

The protein belongs to the DszB desulfinase family. Monomer.

The protein localises to the cytoplasm. It catalyses the reaction 2'-hydroxybiphenyl-2-sulfinate + H2O = biphenyl-2-ol + sulfite + H(+). Its pathway is sulfur metabolism; dibenzothiophene degradation. Its function is as follows. Catalyzes the third and final step of the '4S' desulfurization pathway that removes covalently bound sulfur from dibenzothiophene (DBT) without breaking carbon-carbon bonds. Oxidizes 2-(2'-hydroxyphenyl)benzene sulphinate (HBPS) to 2-hydroxybiphenyl (HBP) plus sulfite. The rate-limiting step of the '4S' desulfurization pathway. This is 2'-hydroxybiphenyl-2-sulfinate desulfinase from Rhodococcus erythropolis (Arthrobacter picolinophilus).